The primary structure comprises 77 residues: U8-lycotoxin-Ls1q (77 aa).

A signal peptide spans 1-20 (MKLMIFAGLVLFAIVSLIEA). A propeptide spanning residues 21–26 (QAEHEK) is cleaved from the precursor.

This sequence belongs to the neurotoxin 19 (CSTX) family. 08 (U8-Lctx) subfamily. Contains 4 disulfide bonds. Expressed by the venom gland.

The protein resides in the secreted. This is U8-lycotoxin-Ls1q from Lycosa singoriensis (Wolf spider).